The following is a 1229-amino-acid chain: uncharacterized protein (1229 aa).

An N-terminal signal peptide occupies residues 1 to 19; sequence MKYFLLLFLLVLSFTLVES. Residues Asn238, Asn270, Asn370, Asn538, Asn691, and Asn701 are each glycosylated (N-linked (GlcNAc...) asparagine). Residues 678 to 813 form the Galectin 1 domain; the sequence is RMVNFANVME…QWNIDTVKMN (136 aa). The span at 818–829 shows a compositional bias: polar residues; it reads HTTTVEPSTPLE. Positions 818 to 903 are disordered; it reads HTTTVEPSTP…TLPPTTTPYN (86 aa). Low complexity predominate over residues 830-846; it reads TASTSQSTPSATLTSTT. Residues 847–869 are compositionally biased toward polar residues; sequence ENIPSTSKIPETSTTQRPTSPIL. The span at 870–901 shows a compositional bias: low complexity; that stretch reads TSGATSTSSSTESTTTSPTTSTTTTLPPTTTP. N-linked (GlcNAc...) asparagine glycans are attached at residues Asn903, Asn938, and Asn948. A Galectin 2 domain is found at 925 to 1059; that stretch reads RPVVFSRYME…ESTIDTVSMA (135 aa). The disordered stretch occupies residues 1061-1087; it reads VRPPTTPTTTTSTTTTTTPKLTTTSTL. The segment covering 1067–1087 has biased composition (low complexity); it reads PTTTTSTTTTTTPKLTTTSTL. Residue Asn1146 is glycosylated (N-linked (GlcNAc...) asparagine).

This is an uncharacterized protein from Caenorhabditis elegans.